An 83-amino-acid polypeptide reads, in one-letter code: Bowman-Birk type proteinase inhibitor C-II (83 aa).

Residues 1-7 (MELNLFK) constitute a propeptide that is removed on maturation. 7 cysteine pairs are disulfide-bonded: Cys21–Cys75, Cys22–Cys37, Cys25–Cys71, Cys27–Cys35, Cys45–Cys52, Cys49–Cys64, and Cys54–Cys62.

Belongs to the Bowman-Birk serine protease inhibitor family.

The chain is Bowman-Birk type proteinase inhibitor C-II from Glycine max (Soybean).